The primary structure comprises 1384 residues: DNA-directed RNA polymerase subunit beta (1384 aa).

The protein belongs to the RNA polymerase beta chain family. As to quaternary structure, the RNAP catalytic core consists of 2 alpha, 1 beta, 1 beta' and 1 omega subunit. When a sigma factor is associated with the core the holoenzyme is formed, which can initiate transcription.

The catalysed reaction is RNA(n) + a ribonucleoside 5'-triphosphate = RNA(n+1) + diphosphate. Its function is as follows. DNA-dependent RNA polymerase catalyzes the transcription of DNA into RNA using the four ribonucleoside triphosphates as substrates. The chain is DNA-directed RNA polymerase subunit beta from Xylella fastidiosa (strain M23).